Here is a 74-residue protein sequence, read N- to C-terminus: UPF0435 protein ABC2298 (74 aa).

Belongs to the UPF0435 family.

The protein is UPF0435 protein ABC2298 of Shouchella clausii (strain KSM-K16) (Alkalihalobacillus clausii).